A 270-amino-acid chain; its full sequence is Phosphatidylglycerol--prolipoprotein diacylglyceryl transferase (270 aa).

4 helical membrane-spanning segments follow: residues 19-39 (FPVY…LWLA), 56-76 (LVLI…VIFE), 92-112 (QGGL…ILFA), and 116-136 (GVSF…GQAI). Arginine 138 is a binding site for a 1,2-diacyl-sn-glycero-3-phospho-(1'-sn-glycerol). Helical transmembrane passes span 178 to 198 (HPTF…LLAL), 206 to 226 (GELF…VEGL), and 236 to 256 (LRIA…FIIV).

The protein belongs to the Lgt family.

It is found in the cell membrane. It carries out the reaction L-cysteinyl-[prolipoprotein] + a 1,2-diacyl-sn-glycero-3-phospho-(1'-sn-glycerol) = an S-1,2-diacyl-sn-glyceryl-L-cysteinyl-[prolipoprotein] + sn-glycerol 1-phosphate + H(+). It participates in protein modification; lipoprotein biosynthesis (diacylglyceryl transfer). Catalyzes the transfer of the diacylglyceryl group from phosphatidylglycerol to the sulfhydryl group of the N-terminal cysteine of a prolipoprotein, the first step in the formation of mature lipoproteins. The protein is Phosphatidylglycerol--prolipoprotein diacylglyceryl transferase of Bacillus anthracis (strain A0248).